Consider the following 46-residue polypeptide: Bacteriocin acidocin 8912 (46 aa).

The propeptide occupies 1–20 (MISSHQKTLTDKELALISGG).

It localises to the secreted. Functionally, has a bactericidal effect on sensitive cells but not a bacteriolytic effect. The protein is Bacteriocin acidocin 8912 (acdT) of Lactobacillus acidophilus.